Here is a 798-residue protein sequence, read N- to C-terminus: Acetamidase regulatory protein (798 aa).

The segment at residues 20-50 is a DNA-binding region (zn(2)-C6 fungal-type); the sequence is CVHCHRRKVRCDARLVGLPCSNCRSAGKTDC. 3 disordered regions span residues 68-96, 115-172, and 632-714; these read VPIR…PPNA, ANRV…ESRA, and LRTT…TLSA. Low complexity-rich tracts occupy residues 82 to 94 and 133 to 147; these read KPIS…SEPP and TRSN…QYQN. Basic and acidic residues predominate over residues 632-641; that stretch reads LRTTTSDRPR. A compositionally biased stretch (polar residues) spans 644 to 663; the sequence is SNLSNNSTNSPASQQKNTSG. A compositionally biased stretch (pro residues) spans 678 to 687; the sequence is PSAPSIPPLQ.

The protein resides in the nucleus. Its function is as follows. Positively regulates the expression of 5 genes involved in the catabolism of certain amides (amdS), omega amino acids (gatA and gabA), and lactams (lamA and lamB) in the presence of omega amino acid inducers. This chain is Acetamidase regulatory protein (amdR), found in Emericella nidulans (strain FGSC A4 / ATCC 38163 / CBS 112.46 / NRRL 194 / M139) (Aspergillus nidulans).